Consider the following 160-residue polypeptide: NADH-quinone oxidoreductase subunit B (160 aa).

Positions 37, 38, 102, and 132 each coordinate [4Fe-4S] cluster.

It belongs to the complex I 20 kDa subunit family. As to quaternary structure, NDH-1 is composed of 14 different subunits. Subunits NuoB, C, D, E, F, and G constitute the peripheral sector of the complex. The cofactor is [4Fe-4S] cluster.

Its subcellular location is the cell inner membrane. The enzyme catalyses a quinone + NADH + 5 H(+)(in) = a quinol + NAD(+) + 4 H(+)(out). Its function is as follows. NDH-1 shuttles electrons from NADH, via FMN and iron-sulfur (Fe-S) centers, to quinones in the respiratory chain. Couples the redox reaction to proton translocation (for every two electrons transferred, four hydrogen ions are translocated across the cytoplasmic membrane), and thus conserves the redox energy in a proton gradient. The protein is NADH-quinone oxidoreductase subunit B of Cupriavidus pinatubonensis (strain JMP 134 / LMG 1197) (Cupriavidus necator (strain JMP 134)).